Reading from the N-terminus, the 84-residue chain is Succinate dehydrogenase membrane anchor subunit (84 aa).

The Mitochondrial matrix portion of the chain corresponds to 1–3 (MIT). Residues 4 to 24 (FQWLIVRVVALFISLTILIDI) form a helical membrane-spanning segment. Residues 25-31 (EMFVVML) lie on the Mitochondrial intermembrane side of the membrane. Residues 32-52 (SFLIIHISIGLKAIIHDYIHF) traverse the membrane as a helical segment. Residue H37 coordinates heme. Position 49 (Y49) interacts with a ubiquinone. Residues 53–58 (QKIKLM) lie on the Mitochondrial matrix side of the membrane. Residues 59–81 (LLILLRVSAIEISRSFRTFYIII) traverse the membrane as a helical segment. Residues 82-84 (KNT) lie on the Mitochondrial intermembrane side of the membrane.

Part of an enzyme complex containing four subunits: a flavoprotein, an iron-sulfur protein, plus two membrane-anchoring proteins. The cofactor is heme.

The protein resides in the mitochondrion inner membrane. It functions in the pathway carbohydrate metabolism; tricarboxylic acid cycle. Its function is as follows. Membrane-anchoring subunit of succinate dehydrogenase (SDH). The polypeptide is Succinate dehydrogenase membrane anchor subunit (SDH4) (Chondrus crispus (Carrageen Irish moss)).